The sequence spans 622 residues: MRRDVRILLLGEAQVGKTSLILSLVGEEFPEEVPARAEEITIPADVTPEKVPTHIVDYSEAEQTEEELQEEIHKANVVCVVYDVSEEATIEKIRTKWIPLVNGRTATGPRLPIILVGNKSDLRPGSTIEAVLPIMSQFPEIETCVECSAKHLRNISELFYYAQKAVLHPTAPLYDPEAKQLRPACAQALTRIFRLSDQDLDHALSDKELNAFQKSCFGHPLAPQALEDVKRVVCKNVAGGVQDDRLTLEGFLFLNTLFIQRGRHETTWTILRRFGYSDSLELTPDYLCPPLYVPPGCSTELNHRGYQFVQRVFEKHDQDHDGVLSPTELESLFSVFSVAPWGPELLHTVPTEAGCLSLRGYLCQWTLVTYLDVQHCLAHLGYLGYPTLCEQDSQAQAITVTREKRLDQEKGQTQRSVLMCKVLGARGVGKSAFLQAFLGHSLGEARDRDAPEKLPTHTINTVRVSGQEKYLILCEVNADSLLDTSLDTTCDVACLMFDSSDPETFVQCATIYKRYYMDGQTPCLFISSKADLPEGVAPPGLSPAEFCRRHRLPAPASFSCLGPAQSSIDVFTQLATMATFPHLAHTELHPTPFWLRGVLVAVGTAVAAVLSFSLYRVLVKSR.

The Cytoplasmic segment spans residues 1–596; that stretch reads MRRDVRILLL…ELHPTPFWLR (596 aa). The Miro 1 domain maps to 2–168; that stretch reads RRDVRILLLG…FYYAQKAVLH (167 aa). Residues G16, K17, T18, and S19 each coordinate GTP. Mg(2+) is bound at residue T18. Residue D57 participates in Mg(2+) binding. A GTP-binding site is contributed by S59. Residue K96 forms a Glycyl lysine isopeptide (Lys-Gly) (interchain with G-Cter in ubiquitin) linkage. The GTP site is built by N118, K119, D121, A149, and K150. K119 is covalently cross-linked (Glycyl lysine isopeptide (Lys-Gly) (interchain with G-Cter in ubiquitin)). K164 participates in a covalent cross-link: Glycyl lysine isopeptide (Lys-Gly) (interchain with G-Cter in ubiquitin). EF-hand domains lie at 184-219 and 304-339; these read ACAQ…CFGH and RGYQ…FSVA. D197, D199, D201, E208, D317, D319, D321, and E328 together coordinate Ca(2+). In terms of domain architecture, Miro 2 spans 415-580; the sequence is RSVLMCKVLG…FTQLATMATF (166 aa). GTP-binding residues include G427, G429, K430, S431, and A432. S431 contacts Mg(2+). E475 contributes to the Mg(2+) binding site. 3 residues coordinate GTP: K529, D531, and C560. Residues 597–619 traverse the membrane as a helical; Anchor for type IV membrane protein segment; sequence GVLVAVGTAVAAVLSFSLYRVLV. Topologically, residues 620-622 are mitochondrial intermembrane; the sequence is KSR.

It belongs to the mitochondrial Rho GTPase family. In terms of assembly, homodimer. Interacts with the kinesin-binding proteins TRAK1/OIP106 and TRAK2/GRIF1, forming a link between mitochondria and the trafficking apparatus of the microtubules. Interacts with ARMCX3. Found in a complex with KIF5B, OGT, RHOT1 and TRAK1. Ubiquitinated by PRKN in a PINK1-dependent manner, leading to its degradation.

The protein localises to the mitochondrion outer membrane. The enzyme catalyses GTP + H2O = GDP + phosphate + H(+). The catalysed reaction is ATP + H2O = ADP + phosphate + H(+). It carries out the reaction UTP + H2O = UDP + phosphate + H(+). Functionally, atypical mitochondrial nucleoside-triphosphatase (NTPase) involved in mitochondrial trafficking. Probably involved in control of anterograde transport of mitochondria and their subcellular distribution. Can hydrolyze GTP, ATP and UTP. The polypeptide is Mitochondrial Rho GTPase 2 (Rhot2) (Rattus norvegicus (Rat)).